The following is a 319-amino-acid chain: Lipoyl synthase (319 aa).

Residues 5-31 (LDTISANPVRPRHPEKANRPDALSPPK) form a disordered region. [4Fe-4S] cluster contacts are provided by C61, C66, C72, C87, C91, C94, and S300. Residues 73 to 289 (WDKKHATFMI…ETVAYTKGFL (217 aa)) enclose the Radical SAM core domain.

This sequence belongs to the radical SAM superfamily. Lipoyl synthase family. It depends on [4Fe-4S] cluster as a cofactor.

It is found in the cytoplasm. The enzyme catalyses [[Fe-S] cluster scaffold protein carrying a second [4Fe-4S](2+) cluster] + N(6)-octanoyl-L-lysyl-[protein] + 2 oxidized [2Fe-2S]-[ferredoxin] + 2 S-adenosyl-L-methionine + 4 H(+) = [[Fe-S] cluster scaffold protein] + N(6)-[(R)-dihydrolipoyl]-L-lysyl-[protein] + 4 Fe(3+) + 2 hydrogen sulfide + 2 5'-deoxyadenosine + 2 L-methionine + 2 reduced [2Fe-2S]-[ferredoxin]. It participates in protein modification; protein lipoylation via endogenous pathway; protein N(6)-(lipoyl)lysine from octanoyl-[acyl-carrier-protein]: step 2/2. Catalyzes the radical-mediated insertion of two sulfur atoms into the C-6 and C-8 positions of the octanoyl moiety bound to the lipoyl domains of lipoate-dependent enzymes, thereby converting the octanoylated domains into lipoylated derivatives. The sequence is that of Lipoyl synthase from Nitrobacter winogradskyi (strain ATCC 25391 / DSM 10237 / CIP 104748 / NCIMB 11846 / Nb-255).